Consider the following 410-residue polypeptide: Voltage-dependent chloride channel 1, chloroplastic (410 aa).

The Lumenal, thylakoid portion of the chain corresponds to 1 to 110; sequence MYQSMNLSVS…RHLLSSFSSR (110 aa). A helical transmembrane segment spans residues 111–131; that stretch reads VILSLIPPVFFFTSVAVVIAS. The Stromal segment spans residues 132 to 147; it reads YNSAVALDWLPGIFPI. The helical transmembrane segment at 148–168 threads the bilayer; it reads LRSSSLPYQLTAPALALLLVF. The Lumenal, thylakoid segment spans residues 169-315; it reads RTEASYSRYE…PLSYTRLTSR (147 aa). The next 2 membrane-spanning stretches (helical) occupy residues 316–336 and 337–357; these read FLVF…HWIV and VPAT…GVLI. At 358-410 the chain is on the lumenal, thylakoid side; it reads EEPFPMLALDELCDLVHSNIQEAVKSEKVIRNRIIAKIKLHEFKHSSNGRHRS.

This sequence belongs to the anion channel-forming bestrophin (TC 1.A.46) family. Voltage-dependent chloride channel subfamily. In terms of tissue distribution, mostly expressed in flowers and leaves and, to a lower extent, in stems and roots.

The protein localises to the plastid. It is found in the chloroplast thylakoid membrane. The enzyme catalyses chloride(in) = chloride(out). Its activity is regulated as follows. More active at positive than at negative voltages. Repressed by the general anion channel inhibitors dithiocyanatostilbene-2,20-disulphonic acid (DIDS) and niflumic acid. Its function is as follows. Voltage-dependent chloride (Cl) channel critical for proton motive force (PMF) partitioning across the thylakoid membrane by anion influx into the lumen during illumination, thus being required for photoprotection under fluctuating light conditions. Influences thylakoid ultrastructure, including lumen size and organization. During photosynthetic response on transition from dark to low light, involved in a sequential mechanism of adaptation; VCCN1 and CLCe first trigger the activation of photoprotection, which is later down-regulated by KEA3 to a low steady state, while adjusting electron transport. On transition from low to high light, accelerates the activation of photoprotection by building up a pH gradient across the thylakoid membrane. The chain is Voltage-dependent chloride channel 1, chloroplastic from Arabidopsis thaliana (Mouse-ear cress).